We begin with the raw amino-acid sequence, 161 residues long: uncharacterized protein (161 aa).

It belongs to the sapovirus VP3 family.

This is an uncharacterized protein from Sapporo virus (strain Human/United Kingdom/Manchester/1993) (Hu/SV/Man/1993/UK).